The following is a 156-amino-acid chain: Small ribosomal subunit protein uS17A (156 aa).

N-acetylserine is present on serine 2. Glycyl lysine isopeptide (Lys-Gly) (interchain with G-Cter in ubiquitin) cross-links involve residues lysine 15, lysine 46, lysine 56, lysine 57, lysine 79, lysine 96, lysine 105, lysine 133, lysine 141, and lysine 148.

This sequence belongs to the universal ribosomal protein uS17 family. In terms of assembly, component of the small ribosomal subunit (SSU). Mature yeast ribosomes consist of a small (40S) and a large (60S) subunit. The 40S small subunit contains 1 molecule of ribosomal RNA (18S rRNA) and 33 different proteins (encoded by 57 genes). The large 60S subunit contains 3 rRNA molecules (25S, 5.8S and 5S rRNA) and 46 different proteins (encoded by 81 genes). In terms of processing, N-terminally acetylated by acetyltransferase NatA.

The protein resides in the cytoplasm. In terms of biological role, component of the ribosome, a large ribonucleoprotein complex responsible for the synthesis of proteins in the cell. The small ribosomal subunit (SSU) binds messenger RNAs (mRNAs) and translates the encoded message by selecting cognate aminoacyl-transfer RNA (tRNA) molecules. The large subunit (LSU) contains the ribosomal catalytic site termed the peptidyl transferase center (PTC), which catalyzes the formation of peptide bonds, thereby polymerizing the amino acids delivered by tRNAs into a polypeptide chain. The nascent polypeptides leave the ribosome through a tunnel in the LSU and interact with protein factors that function in enzymatic processing, targeting, and the membrane insertion of nascent chains at the exit of the ribosomal tunnel. The sequence is that of Small ribosomal subunit protein uS17A from Saccharomyces cerevisiae (strain ATCC 204508 / S288c) (Baker's yeast).